The chain runs to 312 residues: DNA-directed RNA polymerase subunit alpha (312 aa).

Residues 1 to 226 are alpha N-terminal domain (alpha-NTD); it reads MIEFEKPIIT…EHLNLFTDLT (226 aa). An alpha C-terminal domain (alpha-CTD) region spans residues 242–312; the sequence is NDEKVLDRTI…DLGLGLKNDK (71 aa).

It belongs to the RNA polymerase alpha chain family. As to quaternary structure, homodimer. The RNAP catalytic core consists of 2 alpha, 1 beta, 1 beta' and 1 omega subunit. When a sigma factor is associated with the core the holoenzyme is formed, which can initiate transcription.

It carries out the reaction RNA(n) + a ribonucleoside 5'-triphosphate = RNA(n+1) + diphosphate. Functionally, DNA-dependent RNA polymerase catalyzes the transcription of DNA into RNA using the four ribonucleoside triphosphates as substrates. The sequence is that of DNA-directed RNA polymerase subunit alpha from Streptococcus agalactiae serotype Ia (strain ATCC 27591 / A909 / CDC SS700).